The chain runs to 411 residues: Citrate synthase (411 aa).

Active-site residues include H304 and D363.

The protein belongs to the citrate synthase family.

The enzyme catalyses oxaloacetate + acetyl-CoA + H2O = citrate + CoA + H(+). It functions in the pathway carbohydrate metabolism; tricarboxylic acid cycle; isocitrate from oxaloacetate: step 1/2. The sequence is that of Citrate synthase (gltA) from Rickettsia australis.